A 379-amino-acid chain; its full sequence is Glutamate 5-kinase (379 aa).

Lys15 provides a ligand contact to ATP. 3 residues coordinate substrate: Ser56, Asp143, and Asn155. 175–176 serves as a coordination point for ATP; that stretch reads SD. Residues 281–358 form the PUA domain; that stretch reads KGTLTIDAGA…CDAAQILGIS (78 aa).

This sequence belongs to the glutamate 5-kinase family.

Its subcellular location is the cytoplasm. It catalyses the reaction L-glutamate + ATP = L-glutamyl 5-phosphate + ADP. Its pathway is amino-acid biosynthesis; L-proline biosynthesis; L-glutamate 5-semialdehyde from L-glutamate: step 1/2. Its function is as follows. Catalyzes the transfer of a phosphate group to glutamate to form L-glutamate 5-phosphate. In Nitrobacter hamburgensis (strain DSM 10229 / NCIMB 13809 / X14), this protein is Glutamate 5-kinase.